Here is a 540-residue protein sequence, read N- to C-terminus: CTP synthase (540 aa).

Positions 1 to 264 (MQYIVVTGGV…ISYLSKLSGK (264 aa)) are amidoligase domain. Ser12 contributes to the CTP binding site. Residue Ser12 participates in UTP binding. 13 to 18 (GLGKGT) is an ATP binding site. Tyr53 lines the L-glutamine pocket. Asp70 contributes to the ATP binding site. 2 residues coordinate Mg(2+): Asp70 and Glu140. CTP-binding positions include 147-149 (DIE), 185-190 (KTKPTQ), and Arg221. Residues 185–190 (KTKPTQ) and Arg221 each bind UTP. A Glutamine amidotransferase type-1 domain is found at 294 to 527 (YVDLHDAYIS…VQQALIYKKN (234 aa)). Residue Gly347 coordinates L-glutamine. The Nucleophile; for glutamine hydrolysis role is filled by Cys374. L-glutamine-binding positions include 375 to 378 (LGFQ), Glu398, and Arg455. Active-site residues include His500 and Glu502.

It belongs to the CTP synthase family. As to quaternary structure, homotetramer.

It catalyses the reaction UTP + L-glutamine + ATP + H2O = CTP + L-glutamate + ADP + phosphate + 2 H(+). The catalysed reaction is L-glutamine + H2O = L-glutamate + NH4(+). The enzyme catalyses UTP + NH4(+) + ATP = CTP + ADP + phosphate + 2 H(+). Its pathway is pyrimidine metabolism; CTP biosynthesis via de novo pathway; CTP from UDP: step 2/2. Its activity is regulated as follows. Allosterically activated by GTP, when glutamine is the substrate; GTP has no effect on the reaction when ammonia is the substrate. The allosteric effector GTP functions by stabilizing the protein conformation that binds the tetrahedral intermediate(s) formed during glutamine hydrolysis. Inhibited by the product CTP, via allosteric rather than competitive inhibition. Catalyzes the ATP-dependent amination of UTP to CTP with either L-glutamine or ammonia as the source of nitrogen. Regulates intracellular CTP levels through interactions with the four ribonucleotide triphosphates. This chain is CTP synthase, found in Thermoplasma volcanium (strain ATCC 51530 / DSM 4299 / JCM 9571 / NBRC 15438 / GSS1).